The sequence spans 95 residues: Large ribosomal subunit protein bL28 (95 aa).

The protein belongs to the bacterial ribosomal protein bL28 family.

This Orientia tsutsugamushi (strain Ikeda) (Rickettsia tsutsugamushi) protein is Large ribosomal subunit protein bL28.